We begin with the raw amino-acid sequence, 484 residues long: Aspartyl/glutamyl-tRNA(Asn/Gln) amidotransferase subunit B (484 aa).

This sequence belongs to the GatB/GatE family. GatB subfamily. As to quaternary structure, heterotrimer of A, B and C subunits.

The catalysed reaction is L-glutamyl-tRNA(Gln) + L-glutamine + ATP + H2O = L-glutaminyl-tRNA(Gln) + L-glutamate + ADP + phosphate + H(+). The enzyme catalyses L-aspartyl-tRNA(Asn) + L-glutamine + ATP + H2O = L-asparaginyl-tRNA(Asn) + L-glutamate + ADP + phosphate + 2 H(+). In terms of biological role, allows the formation of correctly charged Asn-tRNA(Asn) or Gln-tRNA(Gln) through the transamidation of misacylated Asp-tRNA(Asn) or Glu-tRNA(Gln) in organisms which lack either or both of asparaginyl-tRNA or glutaminyl-tRNA synthetases. The reaction takes place in the presence of glutamine and ATP through an activated phospho-Asp-tRNA(Asn) or phospho-Glu-tRNA(Gln). The chain is Aspartyl/glutamyl-tRNA(Asn/Gln) amidotransferase subunit B from Bordetella pertussis (strain Tohama I / ATCC BAA-589 / NCTC 13251).